Here is a 749-residue protein sequence, read N- to C-terminus: 5-methyltetrahydropteroyltriglutamate--homocysteine methyltransferase (749 aa).

Residues 15-18 and Lys114 contribute to the 5-methyltetrahydropteroyltri-L-glutamate site; that span reads RELK. L-homocysteine is bound by residues 425 to 427 and Glu478; that span reads IGS. L-methionine is bound by residues 425-427 and Glu478; that span reads IGS. Trp555 is a 5-methyltetrahydropteroyltri-L-glutamate binding site. Residue Asp593 participates in L-homocysteine binding. Asp593 contacts L-methionine. Position 599 (Glu599) interacts with 5-methyltetrahydropteroyltri-L-glutamate. Residues His636, Cys638, and Glu660 each contribute to the Zn(2+) site. His689 (proton donor) is an active-site residue. Residue Cys721 participates in Zn(2+) binding.

It belongs to the vitamin-B12 independent methionine synthase family. Requires Zn(2+) as cofactor.

The enzyme catalyses 5-methyltetrahydropteroyltri-L-glutamate + L-homocysteine = tetrahydropteroyltri-L-glutamate + L-methionine. The protein operates within amino-acid biosynthesis; L-methionine biosynthesis via de novo pathway; L-methionine from L-homocysteine (MetE route): step 1/1. In terms of biological role, catalyzes the transfer of a methyl group from 5-methyltetrahydrofolate to homocysteine resulting in methionine formation. The sequence is that of 5-methyltetrahydropteroyltriglutamate--homocysteine methyltransferase from Streptococcus suis (strain 05ZYH33).